Here is a 372-residue protein sequence, read N- to C-terminus: Cytochrome b (372 aa).

4 helical membrane passes run 25–45 (FGSM…FLAI), 69–90 (WCLQ…YIHI), 105–125 (WMSG…GYVL), and 170–190 (FFAL…IHII). His75 and His89 together coordinate heme b. Heme b contacts are provided by His174 and His188. Residue His193 participates in a ubiquinone binding. The next 4 membrane-spanning stretches (helical) occupy residues 218–238 (YKDL…MSFS), 280–300 (LGGT…PFTH), 312–332 (MAQF…WAAS), and 339–358 (YITI…IINP).

The protein belongs to the cytochrome b family. As to quaternary structure, the cytochrome bc1 complex contains 3 respiratory subunits (MT-CYB, CYC1 and UQCRFS1), 2 core proteins (UQCRC1 and UQCRC2) and probably 6 low-molecular weight proteins. Heme b is required as a cofactor.

The protein localises to the mitochondrion inner membrane. Component of the ubiquinol-cytochrome c reductase complex (complex III or cytochrome b-c1 complex) that is part of the mitochondrial respiratory chain. The b-c1 complex mediates electron transfer from ubiquinol to cytochrome c. Contributes to the generation of a proton gradient across the mitochondrial membrane that is then used for ATP synthesis. In Acrochordus granulatus (Rasp-skinned water snake), this protein is Cytochrome b (MT-CYB).